Reading from the N-terminus, the 703-residue chain is Harmonin-binding protein USHBP1 (703 aa).

Over residues 1-15 (MSARATRPRSRRGRH) the composition is skewed to basic residues. Disordered regions lie at residues 1–113 (MSAR…PPGN) and 138–172 (HQPP…CQRE). Residues 189–227 (SREDELVRTQASLEAIRAEKETLQKEVQELQDSLLRLEP) adopt a coiled-coil conformation. The tract at residues 228 to 256 (CPHLSHNQAGGSGSGSSSSEADREPWETQ) is disordered. Residues 289–309 (EMHIMEAQMEQLRGSIEKLKC) adopt a coiled-coil conformation. The disordered stretch occupies residues 396–416 (MDAGAQQNPQPSPEGSSVDKP). The span at 400 to 410 (AQQNPQPSPEG) shows a compositional bias: polar residues. Residues 476-513 (RLEKTQIQQDLVAAREALADLMLRLQLVRREKRGLELR) adopt a coiled-coil conformation. A disordered region spans residues 540–583 (AGGANSSGGHSSGGGSSGDEEEWYQGLPAVPGGTSGIDGGQVGR). Residues 572–581 (GTSGIDGGQV) are compositionally biased toward gly residues. Residues 596–681 (ASLTRTLDLQ…QAEEVAVLEA (86 aa)) are a coiled coil.

This sequence belongs to the MCC family. In terms of assembly, interacts via its C-terminus with the first PDZ domain of USH1C. Highest level of expression in heart, and moderate to low expression in skeletal muscle, kidney, liver, small intestine, placenta and lung.

In Homo sapiens (Human), this protein is Harmonin-binding protein USHBP1.